Here is a 187-residue protein sequence, read N- to C-terminus: Peptidyl-tRNA hydrolase (187 aa).

Residue Tyr-15 coordinates tRNA. His-20 serves as the catalytic Proton acceptor. Residues Phe-64, Asn-66, and Asn-112 each contribute to the tRNA site.

Belongs to the PTH family. Monomer.

It is found in the cytoplasm. It carries out the reaction an N-acyl-L-alpha-aminoacyl-tRNA + H2O = an N-acyl-L-amino acid + a tRNA + H(+). Its function is as follows. Hydrolyzes ribosome-free peptidyl-tRNAs (with 1 or more amino acids incorporated), which drop off the ribosome during protein synthesis, or as a result of ribosome stalling. Catalyzes the release of premature peptidyl moieties from peptidyl-tRNA molecules trapped in stalled 50S ribosomal subunits, and thus maintains levels of free tRNAs and 50S ribosomes. This chain is Peptidyl-tRNA hydrolase, found in Parabacteroides distasonis (strain ATCC 8503 / DSM 20701 / CIP 104284 / JCM 5825 / NCTC 11152).